Reading from the N-terminus, the 78-residue chain is MSTIEESVKAIIAEQLGVKKEEVVNNASFVDDLGADSLDTVELVMALEEEFDTEIPDEEAEKITTVQAAIDFIQASQQ.

One can recognise a Carrier domain in the interval 2–77; it reads STIEESVKAI…AAIDFIQASQ (76 aa). Position 37 is an O-(pantetheine 4'-phosphoryl)serine (serine 37).

The protein belongs to the acyl carrier protein (ACP) family. In terms of processing, 4'-phosphopantetheine is transferred from CoA to a specific serine of apo-ACP by AcpS. This modification is essential for activity because fatty acids are bound in thioester linkage to the sulfhydryl of the prosthetic group.

The protein localises to the cytoplasm. It participates in lipid metabolism; fatty acid biosynthesis. Functionally, carrier of the growing fatty acid chain in fatty acid biosynthesis. The sequence is that of Acyl carrier protein from Sodalis glossinidius (strain morsitans).